The primary structure comprises 257 residues: Glutamate racemase (257 aa).

Substrate contacts are provided by residues 12-13 and 44-45; these read DS and YG. Catalysis depends on C75, which acts as the Proton donor/acceptor. 76–77 serves as a coordination point for substrate; it reads NT. C185 acts as the Proton donor/acceptor in catalysis. Substrate is bound at residue 186-187; that stretch reads TH.

The protein belongs to the aspartate/glutamate racemases family.

The enzyme catalyses L-glutamate = D-glutamate. The protein operates within cell wall biogenesis; peptidoglycan biosynthesis. Its function is as follows. Provides the (R)-glutamate required for cell wall biosynthesis. The sequence is that of Glutamate racemase from Clostridium botulinum (strain 657 / Type Ba4).